The chain runs to 402 residues: Zinc finger protein 322 (402 aa).

The C2H2-type 1; atypical zinc finger occupies Tyr-43–His-65. C2H2-type zinc fingers lie at residues Tyr-71–His-93, Tyr-99–His-121, Tyr-127–His-149, Tyr-155–His-177, Phe-183–His-205, Tyr-211–His-233, Tyr-239–His-261, and Tyr-267–His-289. The C2H2-type 10; degenerate zinc finger occupies Phe-293–His-315. The C2H2-type 11; degenerate zinc-finger motif lies at Tyr-351 to His-373. Ser-391 carries the post-translational modification Phosphoserine.

This sequence belongs to the krueppel C2H2-type zinc-finger protein family. Interacts with POU5F1. In terms of tissue distribution, ubiquitous. Highly expressed in heart and skeletal muscle.

Its subcellular location is the cytoplasm. The protein localises to the nucleus. Its function is as follows. Transcriptional activator. Important for maintenance of pluripotency in embryonic stem cells. Binds directly to the POU5F1 distal enhancer and the NANOG proximal promoter, and enhances expression of both genes. Can also bind to numerous other gene promoters and regulates expression of many other pluripotency factors, either directly or indirectly. Promotes inhibition of MAPK signaling during embryonic stem cell differentiation. The sequence is that of Zinc finger protein 322 (ZNF322) from Homo sapiens (Human).